The chain runs to 189 residues: MALSFSLLMAVLVLSYKSICSLGCDLPQTHSLGNRRALILLAQMGRISHFSCLKDRHDFGFPEEEFDGHQFQKAQAISVLHEMIQQTFNLFSTEDSSAAWEQSLLEKFSTELYQQLNDLEACVIQEVGVEETPLMNEDSILAVRKYFQRITLYLTEKKYSPCAWEVVRAEIMRSLSFSTNLQKRLRRKD.

The first 23 residues, 1–23 (MALSFSLLMAVLVLSYKSICSLG), serve as a signal peptide directing secretion. 2 disulfides stabilise this stretch: cysteine 24-cysteine 122 and cysteine 52-cysteine 162.

This sequence belongs to the alpha/beta interferon family.

Its subcellular location is the secreted. In terms of biological role, produced by macrophages, IFN-alpha have antiviral activities. Interferon stimulates the production of two enzymes: a protein kinase and an oligoadenylate synthetase. The polypeptide is Interferon alpha-4 (IFNA4) (Homo sapiens (Human)).